A 495-amino-acid chain; its full sequence is MFS transporter prlL (495 aa).

Residues 1–24 (MAQSFANEHDPAKRAEERGHVGTI) form a disordered region. Residues 7–20 (NEHDPAKRAEERGH) show a composition bias toward basic and acidic residues. A run of 11 helical transmembrane segments spans residues 102 to 122 (IALM…NVLL), 130 to 150 (WIAI…GAHN), 159 to 179 (FLLG…LTFW), 189 to 209 (VAFI…IAYA), 224 to 244 (WLFI…LFFL), 292 to 312 (LWAH…LSLF), 329 to 349 (LMTV…SWSA), 356 to 376 (GLHS…SAVL), 386 to 406 (GCLI…LGWL), 418 to 438 (LAIA…GVWI), and 449 to 469 (PTGH…CVAL).

This sequence belongs to the major facilitator superfamily.

The protein resides in the cell membrane. Its function is as follows. Efflux pump that might be required for efficient secretion of pyrrolocin or other secondary metabolies produced by the pyrrolocin gene cluster. This chain is MFS transporter prlL, found in Fungal sp. (strain NRRL 50135).